Here is a 389-residue protein sequence, read N- to C-terminus: Na(+)/H(+) antiporter NhaA (389 aa).

Transmembrane regions (helical) follow at residues 24–44 (ILLILCTILSLSIANSLAGPA), 56–76 (LSIEHWVNDALMAVFFLFVGL), 94–114 (LLPIFAAIGGIGVPALIHYTL), 122–142 (AGTGIPMATDIAFALGVLALL), 152–172 (VFLTALAVMDDLGAIIVIAMF), 176–196 (QFSLVYLLSALAVFGLLLVLN), 216–236 (FLMLKSGVHATIAGVLLAFAI), 259–279 (PVAFIILPIFALANTGIVIGS), 291–311 (LGIIGGLVFGKPLGIALLSFV), 326–346 (WTHIVGAGILGGIGFTMSIFI), and 363–383 (MAILMASVAAGGLGFLWLSFF).

Belongs to the NhaA Na(+)/H(+) (TC 2.A.33) antiporter family.

Its subcellular location is the cell inner membrane. The catalysed reaction is Na(+)(in) + 2 H(+)(out) = Na(+)(out) + 2 H(+)(in). Functionally, na(+)/H(+) antiporter that extrudes sodium in exchange for external protons. The chain is Na(+)/H(+) antiporter NhaA from Dechloromonas aromatica (strain RCB).